Here is a 192-residue protein sequence, read N- to C-terminus: Probable apo-citrate lyase phosphoribosyl-dephospho-CoA transferase (192 aa).

It belongs to the CitX family.

The catalysed reaction is apo-[citrate lyase ACP] + 2'-(5''-triphospho-alpha-D-ribosyl)-3'-dephospho-CoA = holo-[citrate lyase ACP] + diphosphate. Its function is as follows. Transfers 2-(5''-triphosphoribosyl)-3'-dephosphocoenzyme-A on a serine residue to the apo-acyl carrier protein (gamma chain) of the citrate lyase to yield holo-acyl carrier protein. In Streptococcus pyogenes serotype M6 (strain ATCC BAA-946 / MGAS10394), this protein is Probable apo-citrate lyase phosphoribosyl-dephospho-CoA transferase.